Here is a 315-residue protein sequence, read N- to C-terminus: MEEAILLNQTSLVTYFRLRGLSVNHKARIAMFSMFLIFYVLTLIGNVLIVITIIYDHRLHTPMYFFLSNLSFIDVCHSTVTVPKMLRDVWSEEKLISFDACVTQMFFLHLFACTEIFLLTVMAYDRYVAICKPLQYMIVMNWKVCVLLAVALWTGGTIHSIALTSLTIKLPYCGPDEIDNFFCDVPQVIKLACIDTHVIEILIVSNSGLISVVCFVVLVVSYAVILVSLRQQISKGKRKALSTCAAHLTVVTLFLGHCIFIYSRPSTSLPEDKVVSVFFTAVTPLLNPIIYTLRNEEMKSALNKLVGRKERKEEK.

Topologically, residues 1–33 are extracellular; that stretch reads MEEAILLNQTSLVTYFRLRGLSVNHKARIAMFS. An N-linked (GlcNAc...) asparagine glycan is attached at N8. A helical membrane pass occupies residues 34 to 54; sequence MFLIFYVLTLIGNVLIVITII. The Cytoplasmic segment spans residues 55 to 61; the sequence is YDHRLHT. The helical transmembrane segment at 62–82 threads the bilayer; that stretch reads PMYFFLSNLSFIDVCHSTVTV. Residues 83-101 are Extracellular-facing; it reads PKMLRDVWSEEKLISFDAC. A disulfide bridge connects residues C101 and C183. The chain crosses the membrane as a helical span at residues 102 to 122; sequence VTQMFFLHLFACTEIFLLTVM. The Cytoplasmic segment spans residues 123-143; it reads AYDRYVAICKPLQYMIVMNWK. A helical membrane pass occupies residues 144 to 164; the sequence is VCVLLAVALWTGGTIHSIALT. Residues 165 to 208 are Extracellular-facing; the sequence is SLTIKLPYCGPDEIDNFFCDVPQVIKLACIDTHVIEILIVSNSG. The helical transmembrane segment at 209 to 229 threads the bilayer; the sequence is LISVVCFVVLVVSYAVILVSL. The Cytoplasmic portion of the chain corresponds to 230–240; sequence RQQISKGKRKA. A helical membrane pass occupies residues 241 to 261; that stretch reads LSTCAAHLTVVTLFLGHCIFI. Topologically, residues 262–272 are extracellular; the sequence is YSRPSTSLPED. Residues 273-293 form a helical membrane-spanning segment; the sequence is KVVSVFFTAVTPLLNPIIYTL. Over 294 to 315 the chain is Cytoplasmic; sequence RNEEMKSALNKLVGRKERKEEK.

Belongs to the G-protein coupled receptor 1 family.

The protein localises to the cell membrane. Functionally, odorant receptor. This is Olfactory receptor 4E1 (OR4E1) from Homo sapiens (Human).